The following is a 318-amino-acid chain: Glutathione synthetase (318 aa).

Residues 129–314 enclose the ATP-grasp domain; that stretch reads KLAITEFPDL…VPEMFAVALE (186 aa). 155 to 211 serves as a coordination point for ATP; that stretch reads HAAQGDVIVKPLDGMGGTGIFRLQRSEPNLNAILETLTDNGTRTIMAQRYIPEIVKG. Residues Glu285 and Asn287 each coordinate Mg(2+).

The protein belongs to the prokaryotic GSH synthase family. The cofactor is Mg(2+). It depends on Mn(2+) as a cofactor.

The catalysed reaction is gamma-L-glutamyl-L-cysteine + glycine + ATP = glutathione + ADP + phosphate + H(+). The protein operates within sulfur metabolism; glutathione biosynthesis; glutathione from L-cysteine and L-glutamate: step 2/2. This Bordetella bronchiseptica (strain ATCC BAA-588 / NCTC 13252 / RB50) (Alcaligenes bronchisepticus) protein is Glutathione synthetase.